A 353-amino-acid polypeptide reads, in one-letter code: DNA polymerase IV (353 aa).

The UmuC domain maps to 14–198 (IIHIDMDAFF…MDISKFHGVG (185 aa)). Residues Asp18 and Asp116 each contribute to the Mg(2+) site. Residue Glu117 is part of the active site.

Belongs to the DNA polymerase type-Y family. Monomer. It depends on Mg(2+) as a cofactor.

The protein localises to the cytoplasm. It catalyses the reaction DNA(n) + a 2'-deoxyribonucleoside 5'-triphosphate = DNA(n+1) + diphosphate. Its function is as follows. Poorly processive, error-prone DNA polymerase involved in untargeted mutagenesis. Copies undamaged DNA at stalled replication forks, which arise in vivo from mismatched or misaligned primer ends. These misaligned primers can be extended by PolIV. Exhibits no 3'-5' exonuclease (proofreading) activity. May be involved in translesional synthesis, in conjunction with the beta clamp from PolIII. The polypeptide is DNA polymerase IV (Streptococcus pneumoniae serotype 2 (strain D39 / NCTC 7466)).